The sequence spans 832 residues: G-type lectin S-receptor-like serine/threonine-protein kinase RLK1 (832 aa).

The first 24 residues, Met1–Ser24, serve as a signal peptide directing secretion. Residues Gln25–Lys461 are Extracellular-facing. 6 N-linked (GlcNAc...) asparagine glycosylation sites follow: Asn29, Asn92, Asn100, Asn178, Asn240, and Asn251. Positions Ser37–Trp157 constitute a Bulb-type lectin domain. The 51-residue stretch at Arg299–Leu349 folds into the EGF-like; atypical domain. Intrachain disulfides connect Cys303–Cys320, Cys314–Cys330, and Cys332–Cys348. Positions Cys357–Asn446 constitute a PAN domain. The N-linked (GlcNAc...) asparagine glycan is linked to Asn361. 2 cysteine pairs are disulfide-bonded: Cys397-Cys420 and Cys401-Cys407. N-linked (GlcNAc...) asparagine glycosylation is present at Asn446. Residues Leu462–Asp482 traverse the membrane as a helical segment. The Cytoplasmic segment spans residues Thr483–Val832. The 273-residue stretch at Arg531–Ile803 folds into the Protein kinase domain. ATP contacts are provided by residues Leu537 to Val545 and Lys563. A caM-binding region spans residues Arg622–Ile638. Catalysis depends on Asp657, which acts as the Proton acceptor.

The protein belongs to the protein kinase superfamily. Ser/Thr protein kinase family.

The protein resides in the cell membrane. The catalysed reaction is L-seryl-[protein] + ATP = O-phospho-L-seryl-[protein] + ADP + H(+). It catalyses the reaction L-threonyl-[protein] + ATP = O-phospho-L-threonyl-[protein] + ADP + H(+). This is G-type lectin S-receptor-like serine/threonine-protein kinase RLK1 (RLK1) from Arabidopsis thaliana (Mouse-ear cress).